A 137-amino-acid polypeptide reads, in one-letter code: Large ribosomal subunit protein uL16 (137 aa).

This sequence belongs to the universal ribosomal protein uL16 family. In terms of assembly, part of the 50S ribosomal subunit.

Functionally, binds 23S rRNA and is also seen to make contacts with the A and possibly P site tRNAs. In Rhodopseudomonas palustris (strain BisB18), this protein is Large ribosomal subunit protein uL16.